Consider the following 223-residue polypeptide: Thiamine-phosphate synthase (223 aa).

Residues 37–41 (QFREK) and D72 each bind 4-amino-2-methyl-5-(diphosphooxymethyl)pyrimidine. Residues D73 and D92 each coordinate Mg(2+). S110 contributes to the 4-amino-2-methyl-5-(diphosphooxymethyl)pyrimidine binding site. 136–138 (TQS) is a 2-[(2R,5Z)-2-carboxy-4-methylthiazol-5(2H)-ylidene]ethyl phosphate binding site. K139 contributes to the 4-amino-2-methyl-5-(diphosphooxymethyl)pyrimidine binding site. 2-[(2R,5Z)-2-carboxy-4-methylthiazol-5(2H)-ylidene]ethyl phosphate-binding positions include G168 and 188–189 (IS).

Belongs to the thiamine-phosphate synthase family. Requires Mg(2+) as cofactor.

The catalysed reaction is 2-[(2R,5Z)-2-carboxy-4-methylthiazol-5(2H)-ylidene]ethyl phosphate + 4-amino-2-methyl-5-(diphosphooxymethyl)pyrimidine + 2 H(+) = thiamine phosphate + CO2 + diphosphate. It catalyses the reaction 2-(2-carboxy-4-methylthiazol-5-yl)ethyl phosphate + 4-amino-2-methyl-5-(diphosphooxymethyl)pyrimidine + 2 H(+) = thiamine phosphate + CO2 + diphosphate. The enzyme catalyses 4-methyl-5-(2-phosphooxyethyl)-thiazole + 4-amino-2-methyl-5-(diphosphooxymethyl)pyrimidine + H(+) = thiamine phosphate + diphosphate. It functions in the pathway cofactor biosynthesis; thiamine diphosphate biosynthesis; thiamine phosphate from 4-amino-2-methyl-5-diphosphomethylpyrimidine and 4-methyl-5-(2-phosphoethyl)-thiazole: step 1/1. In terms of biological role, condenses 4-methyl-5-(beta-hydroxyethyl)thiazole monophosphate (THZ-P) and 2-methyl-4-amino-5-hydroxymethyl pyrimidine pyrophosphate (HMP-PP) to form thiamine monophosphate (TMP). The polypeptide is Thiamine-phosphate synthase (Streptococcus agalactiae serotype III (strain NEM316)).